Reading from the N-terminus, the 366-residue chain is DNA-directed RNA polymerase subunit alpha (366 aa).

An alpha N-terminal domain (alpha-NTD) region spans residues 1-233 (MVREKVRVST…DLFLPFLHAE (233 aa)). The segment at 264 to 366 (KNEIALKSIF…KDEMGFESLE (103 aa)) is alpha C-terminal domain (alpha-CTD).

It belongs to the RNA polymerase alpha chain family. As to quaternary structure, in plastids the minimal PEP RNA polymerase catalytic core is composed of four subunits: alpha, beta, beta', and beta''. When a (nuclear-encoded) sigma factor is associated with the core the holoenzyme is formed, which can initiate transcription.

The protein resides in the plastid. The protein localises to the chloroplast. It catalyses the reaction RNA(n) + a ribonucleoside 5'-triphosphate = RNA(n+1) + diphosphate. DNA-dependent RNA polymerase catalyzes the transcription of DNA into RNA using the four ribonucleoside triphosphates as substrates. The chain is DNA-directed RNA polymerase subunit alpha from Oenothera elata subsp. hookeri (Hooker's evening primrose).